Consider the following 225-residue polypeptide: Cytochrome c oxidase subunit 2 (225 aa).

The Mitochondrial intermembrane segment spans residues 1 to 25 (MSTWMMFMFQESNSFYADNLVSFHN). A helical membrane pass occupies residues 26 to 47 (LVMMIIIMISTLTIYIIFDLFM). Over 48–62 (NKFSNLFLLKNHNIE) the chain is Mitochondrial matrix. Residues 63 to 82 (IIWTIVPIVILLIICFPSLK) traverse the membrane as a helical segment. The Mitochondrial intermembrane portion of the chain corresponds to 83 to 225 (ILYLIDEIIN…FFLNWINKQN (143 aa)). Residues H159, C194, E196, C198, H202, and M205 each coordinate Cu cation. E196 is a binding site for Mg(2+).

Belongs to the cytochrome c oxidase subunit 2 family. As to quaternary structure, component of the cytochrome c oxidase (complex IV, CIV), a multisubunit enzyme composed of a catalytic core of 3 subunits and several supernumerary subunits. The complex exists as a monomer or a dimer and forms supercomplexes (SCs) in the inner mitochondrial membrane with ubiquinol-cytochrome c oxidoreductase (cytochrome b-c1 complex, complex III, CIII). Requires Cu cation as cofactor.

The protein resides in the mitochondrion inner membrane. It carries out the reaction 4 Fe(II)-[cytochrome c] + O2 + 8 H(+)(in) = 4 Fe(III)-[cytochrome c] + 2 H2O + 4 H(+)(out). Functionally, component of the cytochrome c oxidase, the last enzyme in the mitochondrial electron transport chain which drives oxidative phosphorylation. The respiratory chain contains 3 multisubunit complexes succinate dehydrogenase (complex II, CII), ubiquinol-cytochrome c oxidoreductase (cytochrome b-c1 complex, complex III, CIII) and cytochrome c oxidase (complex IV, CIV), that cooperate to transfer electrons derived from NADH and succinate to molecular oxygen, creating an electrochemical gradient over the inner membrane that drives transmembrane transport and the ATP synthase. Cytochrome c oxidase is the component of the respiratory chain that catalyzes the reduction of oxygen to water. Electrons originating from reduced cytochrome c in the intermembrane space (IMS) are transferred via the dinuclear copper A center (CU(A)) of subunit 2 and heme A of subunit 1 to the active site in subunit 1, a binuclear center (BNC) formed by heme A3 and copper B (CU(B)). The BNC reduces molecular oxygen to 2 water molecules using 4 electrons from cytochrome c in the IMS and 4 protons from the mitochondrial matrix. This chain is Cytochrome c oxidase subunit 2 (COII), found in Apis koschevnikovi (Koschevnikov's honey bee).